We begin with the raw amino-acid sequence, 350 residues long: Ornithine carbamoyltransferase, mitochondrial (350 aa).

A mitochondrion-targeting transit peptide spans 1 to 30; it reads MLHHMRTIINASWRYGNKCIVRQFGFSQTY. Carbamoyl phosphate is bound by residues 86-90, Arg137, and His164; that span reads STRTR. Arg137 lines the L-ornithine pocket. Residues Asn195, 259-263, 298-301, and Arg326 contribute to the L-ornithine site; these read DTWVS and HCLP. Residue Cys299 is part of the active site. Residue Arg326 participates in carbamoyl phosphate binding.

The protein belongs to the aspartate/ornithine carbamoyltransferase superfamily. OTCase family. Homotrimer. In terms of tissue distribution, liver.

It localises to the mitochondrion matrix. It carries out the reaction carbamoyl phosphate + L-ornithine = L-citrulline + phosphate + H(+). Its pathway is nitrogen metabolism; urea cycle; L-citrulline from L-ornithine and carbamoyl phosphate: step 1/1. OTC is necessary for the tadpoles transition from an ammonotelic, aquatic larva to a ureotelic, terrestrial adult. This chain is Ornithine carbamoyltransferase, mitochondrial, found in Aquarana catesbeiana (American bullfrog).